A 475-amino-acid chain; its full sequence is Exodeoxyribonuclease 7 large subunit (475 aa).

It belongs to the XseA family. In terms of assembly, heterooligomer composed of large and small subunits.

The protein localises to the cytoplasm. It carries out the reaction Exonucleolytic cleavage in either 5'- to 3'- or 3'- to 5'-direction to yield nucleoside 5'-phosphates.. In terms of biological role, bidirectionally degrades single-stranded DNA into large acid-insoluble oligonucleotides, which are then degraded further into small acid-soluble oligonucleotides. In Bartonella henselae (strain ATCC 49882 / DSM 28221 / CCUG 30454 / Houston 1) (Rochalimaea henselae), this protein is Exodeoxyribonuclease 7 large subunit.